The following is a 452-amino-acid chain: Exodeoxyribonuclease 7 large subunit (452 aa).

It belongs to the XseA family. In terms of assembly, heterooligomer composed of large and small subunits.

The protein resides in the cytoplasm. The enzyme catalyses Exonucleolytic cleavage in either 5'- to 3'- or 3'- to 5'-direction to yield nucleoside 5'-phosphates.. In terms of biological role, bidirectionally degrades single-stranded DNA into large acid-insoluble oligonucleotides, which are then degraded further into small acid-soluble oligonucleotides. The protein is Exodeoxyribonuclease 7 large subunit of Bacillus cereus (strain B4264).